The chain runs to 1102 residues: MLIRWKSKDKSSSSTSSSSSTSKKKRKGRESEDDWQNDKSNRNQPTDQAIDDRRRSARSREDPRRHTLGGDMLQWHKECPHALTIARLSYFHSPFCLYPLLPQQTPQMRVYTPTNQGPLFDDDPGIMSEAETASTGFRRGGKQRSSLPVVRTPSKTLERPLGLVFLQYRSETKRALLPNEITSIDTVRALFVRSFPRQLTMQYLEGPNVKIYIHDSSKDMFYELEDVRSHLREIRDRSVLRLFESNEVSAPQVLPGGQNIPQPLQPAAIPNQWDQEQSYFSEPEFDSEYQHQHIHKSKQPTKTPYYVGTTQTLPRGMYSDRTKGAIDGYMSSPERSGASRGAYEEPYYSQYGTRSATVTPIIDEEQGDISIADDQYAMYGVKNVGRIPRVPPNQMYDHTRSEDLHRIRVEHMERQLANLTGLVQKALTQNPQLPLVNNSPNILNIPGQYRNAEATGDGTVCTREKPPKLGKSTCHKSVSFEKSVSFSDDIQGVPKSHSPQHSADTKPPKPAIKSSTLPRTSSQERDRLKPPPPPKPLVMIAGNQYRTDLTLAPEVYNQLRGLQKKAMDLRTEVRTLRRLTQTQAVAVREDIKDTFMRIRATLLSNSGFVWGQGDKERTNLTREEEIYKQEVIRLEKDLADLESSVEGLRGEVINRRTRVNMVAVEDMALVLSRASKTVAELKMRFPVLQQGLRNLISNEMEHVCREEAFLKDEPDRLENALRRCKKLTGTLVTLKRLASVQEQRLPIPDTAGTDETIKPPETHNNVNKPIPSPRLGTVVASGGIAPENALDALLDXXXXXXXXAALHHADAHRPDDSTSDDSSQTLQNSITTKISQSQLYPSEPVSSNVGLRRLHSYPSGSDTDTSPPQPTRPTTGKPPVPERNAELLSKVNNKRVPPPPPPRTSSRSPLASPTSPHVPQHHRGQQQQQPAVTLSDCEQQQRTSEGTDSGSESVCSDNSQRQLALELRHQELLKKQRQLQEQYQRLQQMSKNAVPLAPTTMNHDIKKTGSESNLPLKMGYNMTVSGSMKNLCGGSGDPTLPFDPSQGSVANNVDHQDGGGSDSSTGGPNSLDGVAIGANGSVGTLPPHLTKTTNKVYETDIL.

Residues 1–11 show a composition bias toward basic and acidic residues; it reads MLIRWKSKDKS. Disordered regions lie at residues 1 to 69 and 295 to 318; these read MLIR…HTLG and HKSK…RGMY. Over residues 12–21 the composition is skewed to low complexity; the sequence is SSSTSSSSST. The span at 50 to 65 shows a compositional bias: basic and acidic residues; sequence IDDRRRSARSREDPRR. Residues 405–430 are a coiled coil; sequence HRIRVEHMERQLANLTGLVQKALTQN. Disordered regions lie at residues 450–475 and 489–539; these read RNAE…STCH and DIQG…PLVM. Coiled coils occupy residues 554-579 and 614-654; these read EVYN…LRRL and DKER…EVIN. 3 disordered regions span residues 745-774, 832-958, and 1031-1087; these read LPIP…PSPR, TKIS…CSDN, and LCGG…TLPP. The segment covering 832-849 has biased composition (polar residues); that stretch reads TKISQSQLYPSEPVSSNV. A compositionally biased stretch (pro residues) spans 867–881; that stretch reads PPQPTRPTTGKPPVP. The span at 904–918 shows a compositional bias: low complexity; it reads TSSRSPLASPTSPHV. Polar residues predominate over residues 936–958; that stretch reads DCEQQQRTSEGTDSGSESVCSDN.

The protein is Coiled-coil domain-containing protein AGAP005037 of Anopheles gambiae (African malaria mosquito).